The chain runs to 214 residues: Cell division protein SepF (214 aa).

The disordered stretch occupies residues glutamate 25–glycine 51.

It belongs to the SepF family. Homodimer. Interacts with FtsZ.

The protein resides in the cytoplasm. In terms of biological role, cell division protein that is part of the divisome complex and is recruited early to the Z-ring. Probably stimulates Z-ring formation, perhaps through the cross-linking of FtsZ protofilaments. Its function overlaps with FtsA. This chain is Cell division protein SepF, found in Mycolicibacterium smegmatis (strain ATCC 700084 / mc(2)155) (Mycobacterium smegmatis).